The following is a 319-amino-acid chain: L-galactose dehydrogenase (319 aa).

The active-site Proton donor is the Y59. The SIS domain occupies 122–269 (HCHDIEFGSL…ANKEISSVLV (148 aa)). H124 serves as a coordination point for substrate.

The protein belongs to the aldo/keto reductase family.

The enzyme catalyses L-galactose + NAD(+) = L-galactono-1,4-lactone + NADH + H(+). Catalyzes the oxidation of L-galactose to L-galactono-1,4-lactone in the presence of NAD(+). Uses NAD(+) as a hydrogen acceptor much more efficiently than NADP(+). The protein is L-galactose dehydrogenase (LGALDH) of Arabidopsis thaliana (Mouse-ear cress).